The chain runs to 68 residues: U1-hexatoxin-Hv1a (68 aa).

5 cysteine pairs are disulfide-bonded: Cys-3-Cys-14, Cys-8-Cys-22, Cys-13-Cys-48, Cys-32-Cys-56, and Cys-50-Cys-63.

Belongs to the MIT-like AcTx family. As to expression, expressed by the venom gland.

The protein resides in the secreted. The chain is U1-hexatoxin-Hv1a from Hadronyche versuta (Blue mountains funnel-web spider).